Reading from the N-terminus, the 268-residue chain is Undecaprenyl-diphosphatase (268 aa).

7 helical membrane-spanning segments follow: residues 43 to 63, 85 to 105, 108 to 128, 141 to 161, 184 to 204, 217 to 237, and 246 to 266; these read FWKT…LAIY, IGVL…GTFI, VLFN…VLLW, AMAF…AAMV, AAEF…VYDV, FIII…VKTF, and FTFF…ALAL.

It belongs to the UppP family.

Its subcellular location is the cell inner membrane. It catalyses the reaction di-trans,octa-cis-undecaprenyl diphosphate + H2O = di-trans,octa-cis-undecaprenyl phosphate + phosphate + H(+). Its function is as follows. Catalyzes the dephosphorylation of undecaprenyl diphosphate (UPP). Confers resistance to bacitracin. This Afipia carboxidovorans (strain ATCC 49405 / DSM 1227 / KCTC 32145 / OM5) (Oligotropha carboxidovorans) protein is Undecaprenyl-diphosphatase.